The chain runs to 63 residues: Keratin-associated protein 19-8 (63 aa).

This sequence belongs to the KRTAP type 19 family. As to quaternary structure, interacts with hair keratins.

Its function is as follows. In the hair cortex, hair keratin intermediate filaments are embedded in an interfilamentous matrix, consisting of hair keratin-associated proteins (KRTAP), which are essential for the formation of a rigid and resistant hair shaft through their extensive disulfide bond cross-linking with abundant cysteine residues of hair keratins. The matrix proteins include the high-sulfur and high-glycine-tyrosine keratins. This chain is Keratin-associated protein 19-8 (KRTAP19-8), found in Homo sapiens (Human).